The sequence spans 114 residues: Ribonuclease P protein component (114 aa).

This sequence belongs to the RnpA family. Consists of a catalytic RNA component (M1 or rnpB) and a protein subunit.

It catalyses the reaction Endonucleolytic cleavage of RNA, removing 5'-extranucleotides from tRNA precursor.. RNaseP catalyzes the removal of the 5'-leader sequence from pre-tRNA to produce the mature 5'-terminus. It can also cleave other RNA substrates such as 4.5S RNA. The protein component plays an auxiliary but essential role in vivo by binding to the 5'-leader sequence and broadening the substrate specificity of the ribozyme. In Lactiplantibacillus plantarum (strain ATCC BAA-793 / NCIMB 8826 / WCFS1) (Lactobacillus plantarum), this protein is Ribonuclease P protein component.